Here is a 151-residue protein sequence, read N- to C-terminus: MTIWVDADACPNVIKEILYRAAERMQLPLILVANQALRVPPSRFIRTLRVAAGFDVADNEIVRQCEAGDLVITADIPLAAEVLEKGAAALNPRGERYSDATIRERLTMCDFMDTLRASGVQTGGPNTLSPRDRQHFAAELDKWWLESQRKK.

It belongs to the UPF0178 family.

In Salmonella paratyphi C (strain RKS4594), this protein is UPF0178 protein YaiI.